The primary structure comprises 305 residues: Homeobox protein ceh-23 (305 aa).

Disordered stretches follow at residues 113 to 140 and 262 to 305; these read ASCP…ERRR and RRSK…KVLN. Positions 120–135 are enriched in polar residues; it reads ASSQATVTLQVPSTGS. The segment at residues 211-270 is a DNA-binding region (homeobox); sequence HRKARTIYGTTQTQQLEDMFKGQMYVVGAERENLAQRLGLSPSQVRIWFQNRRSKHRRKQ. A compositionally biased stretch (acidic residues) spans 287–305; the sequence is GKDEEEDDEEDEDDVKVLN.

It belongs to the distal-less homeobox family.

It localises to the nucleus. Probable transcription factor. Required for differentiation of AIY interneurons, acting downstream of LIM/homeobox protein ttx-3. Modulates gene expression, acting downstream of AMP kinase aak-2/AMPK signaling. Modulates lifespan. This is Homeobox protein ceh-23 (ceh-23) from Caenorhabditis elegans.